A 287-amino-acid polypeptide reads, in one-letter code: Glucose import system permease protein GlcU (287 aa).

A run of 7 helical transmembrane segments spans residues 14 to 34, 76 to 96, 113 to 133, 149 to 169, 194 to 214, 218 to 238, and 250 to 270; these read HYLA…AMLI, IIVI…AYFF, VLFS…LLPL, IIFA…SMFI, IVFP…IIQA, FFIP…IAVL, and DTFA…VFLG. The ABC transmembrane type-1 domain maps to 71–269; that stretch reads LINSLIIVIP…IIPLAIFVFL (199 aa).

Belongs to the binding-protein-dependent transport system permease family. As to quaternary structure, the complex is composed of two ATP-binding proteins (GlcV), two transmembrane proteins (GlcT and GlcU) and a solute-binding protein (GlcS).

Its subcellular location is the cell membrane. In terms of biological role, part of the ABC transporter complex GlcSTUV involved in glucose uptake. Responsible for the translocation of the substrate across the membrane. This Saccharolobus solfataricus (strain ATCC 35092 / DSM 1617 / JCM 11322 / P2) (Sulfolobus solfataricus) protein is Glucose import system permease protein GlcU.